We begin with the raw amino-acid sequence, 225 residues long: Protein GrpE (225 aa).

Disordered regions lie at residues 1–44 and 183–225; these read MTEE…ENAG and VAVA…PDEG.

This sequence belongs to the GrpE family. Homodimer.

The protein resides in the cytoplasm. Participates actively in the response to hyperosmotic and heat shock by preventing the aggregation of stress-denatured proteins, in association with DnaK and GrpE. It is the nucleotide exchange factor for DnaK and may function as a thermosensor. Unfolded proteins bind initially to DnaJ; upon interaction with the DnaJ-bound protein, DnaK hydrolyzes its bound ATP, resulting in the formation of a stable complex. GrpE releases ADP from DnaK; ATP binding to DnaK triggers the release of the substrate protein, thus completing the reaction cycle. Several rounds of ATP-dependent interactions between DnaJ, DnaK and GrpE are required for fully efficient folding. The chain is Protein GrpE from Streptomyces coelicolor (strain ATCC BAA-471 / A3(2) / M145).